We begin with the raw amino-acid sequence, 677 residues long: UvrABC system protein B (677 aa).

Residues 26 to 414 (DNLDAGLAHQ…SGNEVVEQVV (389 aa)) form the Helicase ATP-binding domain. 39 to 46 (GVTGSGKT) serves as a coordination point for ATP. The Beta-hairpin motif lies at 92–115 (YYDYYQPEAYVPTTDTFIEKDASI). Residues 432–598 (QVDDLMSEIR…GLNKDITDVM (167 aa)) form the Helicase C-terminal domain. Residues 637–672 (MKEIDAKEKEMYKAAQNLEFEQAGKLRDEVAELREQ) form the UVR domain.

This sequence belongs to the UvrB family. In terms of assembly, forms a heterotetramer with UvrA during the search for lesions. Interacts with UvrC in an incision complex.

The protein localises to the cytoplasm. In terms of biological role, the UvrABC repair system catalyzes the recognition and processing of DNA lesions. A damage recognition complex composed of 2 UvrA and 2 UvrB subunits scans DNA for abnormalities. Upon binding of the UvrA(2)B(2) complex to a putative damaged site, the DNA wraps around one UvrB monomer. DNA wrap is dependent on ATP binding by UvrB and probably causes local melting of the DNA helix, facilitating insertion of UvrB beta-hairpin between the DNA strands. Then UvrB probes one DNA strand for the presence of a lesion. If a lesion is found the UvrA subunits dissociate and the UvrB-DNA preincision complex is formed. This complex is subsequently bound by UvrC and the second UvrB is released. If no lesion is found, the DNA wraps around the other UvrB subunit that will check the other stand for damage. In Idiomarina loihiensis (strain ATCC BAA-735 / DSM 15497 / L2-TR), this protein is UvrABC system protein B.